Reading from the N-terminus, the 429-residue chain is D-amino acid dehydrogenase (429 aa).

Position 3 to 17 (3 to 17 (VVVLGSGVVGVTSAY)) interacts with FAD.

Belongs to the DadA oxidoreductase family. The cofactor is FAD.

It catalyses the reaction a D-alpha-amino acid + A + H2O = a 2-oxocarboxylate + AH2 + NH4(+). Its pathway is amino-acid degradation; D-alanine degradation; NH(3) and pyruvate from D-alanine: step 1/1. In terms of biological role, oxidative deamination of D-amino acids. The chain is D-amino acid dehydrogenase from Paraburkholderia xenovorans (strain LB400).